A 204-amino-acid chain; its full sequence is N-(5'-phosphoribosyl)anthranilate isomerase (204 aa).

It belongs to the TrpF family.

It catalyses the reaction N-(5-phospho-beta-D-ribosyl)anthranilate = 1-(2-carboxyphenylamino)-1-deoxy-D-ribulose 5-phosphate. It participates in amino-acid biosynthesis; L-tryptophan biosynthesis; L-tryptophan from chorismate: step 3/5. This chain is N-(5'-phosphoribosyl)anthranilate isomerase, found in Syntrophomonas wolfei subsp. wolfei (strain DSM 2245B / Goettingen).